The sequence spans 427 residues: UPF0415 protein C7orf25 homolog (427 aa).

The span at 200–234 (GGEEEDEEDQEGDHEDLVEEEEDGEDDNDDDSDDT) shows a compositional bias: acidic residues. The disordered stretch occupies residues 200–236 (GGEEEDEEDQEGDHEDLVEEEEDGEDDNDDDSDDTDL).

It belongs to the UPF0415 family.

The polypeptide is UPF0415 protein C7orf25 homolog (Danio rerio (Zebrafish)).